Consider the following 215-residue polypeptide: MRFFIDTANVEDIKKAHKMGILDGVTTNPSLVAKEGVDFHTRLREICEIVGDVSVSAEVIALDAEGMIREGKELAQIAPNITVKVPMTPAGLEAVAALSKENITTNVTLIFNPNQALLAARAGATYVSPFLGRLDDIGQDGMGLVETIAQIFVIHDIPTQIIAASVRNPVHVTNAALAGADIATIPLNVIESLTQHPLTTQGIERFLADWEKAQQ.

Lys84 (schiff-base intermediate with substrate) is an active-site residue.

This sequence belongs to the transaldolase family. Type 3B subfamily.

It localises to the cytoplasm. It catalyses the reaction D-sedoheptulose 7-phosphate + D-glyceraldehyde 3-phosphate = D-erythrose 4-phosphate + beta-D-fructose 6-phosphate. Its pathway is carbohydrate degradation; pentose phosphate pathway; D-glyceraldehyde 3-phosphate and beta-D-fructose 6-phosphate from D-ribose 5-phosphate and D-xylulose 5-phosphate (non-oxidative stage): step 2/3. Its function is as follows. Transaldolase is important for the balance of metabolites in the pentose-phosphate pathway. The polypeptide is Probable transaldolase (Exiguobacterium sibiricum (strain DSM 17290 / CCUG 55495 / CIP 109462 / JCM 13490 / 255-15)).